Here is a 1224-residue protein sequence, read N- to C-terminus: Integrin alpha pat-2 (1224 aa).

An N-terminal signal peptide occupies residues 1–27; that stretch reads MREGSFPRRTRLLCLLAAVVLISTVTS. The Extracellular portion of the chain corresponds to 28-1153; that stretch reads FNIDTKNVVL…ASEEGRDLPW (1126 aa). FG-GAP repeat units lie at residues 29–96, 110–173, 180–235, 236–292, 293–347, 364–423, and 427–490; these read NIDT…TCRE, NGSH…KTEE, EPAR…TDRP, NTEY…MMIN, LTDE…KPQY, GKQL…GVRE, and QKIE…PESA. 4 N-linked (GlcNAc...) asparagine glycosylation sites follow: Asn-74, Asn-110, Asn-230, and Asn-292. A glycan (N-linked (GlcNAc...) asparagine) is linked at Asn-610. The short motif at 622 to 624 is the Cell attachment site element; sequence RGD. N-linked (GlcNAc...) asparagine glycans are attached at residues Asn-681, Asn-775, and Asn-819. Disordered stretches follow at residues 898-968 and 981-1037; these read LRIT…QNTG and DYEY…KARF. Residues 920-931 are compositionally biased toward acidic residues; it reads REEDDESYEDET. Over residues 955 to 964 the composition is skewed to basic and acidic residues; it reads VYERDEDKIR. The segment covering 984–1003 has biased composition (acidic residues); it reads YIPDDQEYDGDDFEDDDEDF. The segment covering 1008–1023 has biased composition (basic residues); it reads SKRVKRAPVPKKKKKE. Residues 1024-1037 show a composition bias toward basic and acidic residues; that stretch reads GSRSGEPRSDKARF. The helical transmembrane segment at 1154 to 1174 threads the bilayer; the sequence is WLYLLAILIGLAILILLILLL. Residues 1175-1224 lie on the Cytoplasmic side of the membrane; that stretch reads WRCGFFKRNRPPTEHAELRAEKQPAAHYADTQSRYAPQDQYSQGRHGQML. Residues 1190-1224 are disordered; it reads AELRAEKQPAAHYADTQSRYAPQDQYSQGRHGQML. The segment covering 1204-1224 has biased composition (polar residues); it reads DTQSRYAPQDQYSQGRHGQML.

The protein belongs to the integrin alpha chain family. In terms of assembly, heterodimer of an alpha and a beta subunit. Alpha pat-2 associates with beta pat-3.

Its subcellular location is the membrane. Its function is as follows. Required for muscle development probably through the regulation of the actin-myosin cytoskeleton. During the formation of neuromuscular junctions at the larval stage, negatively regulates membrane protrusion from body wall muscles, probably through lamins such as epi-1, lam-2 and unc-52. Required for distal tip cell migration and dorsal pathfinding. Required for egg-laying. May play a role in cell motility and cell-cell interactions. This chain is Integrin alpha pat-2, found in Caenorhabditis briggsae.